The following is a 185-amino-acid chain: Ribosome-recycling factor (185 aa).

Belongs to the RRF family.

Its subcellular location is the cytoplasm. Responsible for the release of ribosomes from messenger RNA at the termination of protein biosynthesis. May increase the efficiency of translation by recycling ribosomes from one round of translation to another. The polypeptide is Ribosome-recycling factor (Macrococcus caseolyticus (strain JCSC5402) (Macrococcoides caseolyticum)).